The following is a 283-amino-acid chain: Pantothenate synthetase (283 aa).

Position 30–37 (30–37 (MGNLHDGH)) interacts with ATP. His-37 serves as the catalytic Proton donor. Position 61 (Gln-61) interacts with (R)-pantoate. Gln-61 serves as a coordination point for beta-alanine. ATP is bound at residue 149–152 (GEKD). Gln-155 contacts (R)-pantoate. Residue 186–189 (LSSR) participates in ATP binding.

This sequence belongs to the pantothenate synthetase family. In terms of assembly, homodimer.

The protein resides in the cytoplasm. The enzyme catalyses (R)-pantoate + beta-alanine + ATP = (R)-pantothenate + AMP + diphosphate + H(+). It functions in the pathway cofactor biosynthesis; (R)-pantothenate biosynthesis; (R)-pantothenate from (R)-pantoate and beta-alanine: step 1/1. Its function is as follows. Catalyzes the condensation of pantoate with beta-alanine in an ATP-dependent reaction via a pantoyl-adenylate intermediate. This Escherichia coli (strain SMS-3-5 / SECEC) protein is Pantothenate synthetase.